Consider the following 98-residue polypeptide: DNA-binding protein Fis (98 aa).

The segment at residues 74 to 93 is a DNA-binding region (H-T-H motif); the sequence is QTRAATMMGINRGTLRKKLK.

Belongs to the transcriptional regulatory Fis family. Homodimer.

Functionally, activates ribosomal RNA transcription. Plays a direct role in upstream activation of rRNA promoters. This Photobacterium profundum (strain SS9) protein is DNA-binding protein Fis.